A 111-amino-acid polypeptide reads, in one-letter code: Probable 4-amino-4-deoxy-L-arabinose-phosphoundecaprenol flippase subunit ArnE (111 aa).

3 helical membrane passes run 36-56 (IVLW…LWLL), 61-81 (VPVG…TLAA), and 88-108 (PVSP…VILG). Positions 40–109 (LGLALACLGL…IIGGIVILGS (70 aa)) constitute an EamA domain.

This sequence belongs to the ArnE family. Heterodimer of ArnE and ArnF.

Its subcellular location is the cell inner membrane. Its pathway is bacterial outer membrane biogenesis; lipopolysaccharide biosynthesis. Translocates 4-amino-4-deoxy-L-arabinose-phosphoundecaprenol (alpha-L-Ara4N-phosphoundecaprenol) from the cytoplasmic to the periplasmic side of the inner membrane. The chain is Probable 4-amino-4-deoxy-L-arabinose-phosphoundecaprenol flippase subunit ArnE from Shigella flexneri.